A 751-amino-acid polypeptide reads, in one-letter code: Transposable element P transposase (751 aa).

A THAP-type zinc finger spans residues 1-77; it reads MKYCKFCCKA…LNADAVPSKV (77 aa).

Its function is as follows. P-element transposase that specifically mediates transposition of P-elements. Mediates both; precise and imprecise excision. This is Transposable element P transposase from Drosophila melanogaster (Fruit fly).